Here is a 239-residue protein sequence, read N- to C-terminus: Transcriptional regulatory protein BtsR (239 aa).

The Response regulatory domain maps to 3–116 (KVLIVDDEPL…RLEKTLARLR (114 aa)). 4-aspartylphosphate is present on aspartate 54. The HTH LytTR-type domain maps to 137–239 (IPCTGHSRIY…LKSLKEAIGL (103 aa)).

Post-translationally, phosphorylated by BtsS.

Its function is as follows. Member of the two-component regulatory system BtsS/BtsR. BtsR regulates expression of btsT by binding to its promoter region. The protein is Transcriptional regulatory protein BtsR of Shigella flexneri.